We begin with the raw amino-acid sequence, 295 residues long: MRHILNLYENINSTARNNSDCPAVILPEEIFFTVSIVGVLENLMVLLAVAKNKSLQSPMYFFICSLAISDMLGSLYKILENVLIMFRNMGYLEPRGSFESTADDVVDSLFILSLLGSICSLSVIAADRYITIFHALQYHSIVTMHRALVVLTVLWAGCTGSGITIVTFSHHVPTVIAFTALFPLMLAFILCLYVHMFLLARSHARRTSSLPKANMRGAITLTVLLGVFIFCWAPFVLHVLLMTFCPADPYCACYMSLFQVNGVLIMCNAVIDPFIYAFRSPELRVAFKKMVICNW.

Residues M1–A23 lie on the Extracellular side of the membrane. N-linked (GlcNAc...) asparagine glycosylation is found at N12 and N17. 2 disulfides stabilise this stretch: C21–C253 and C245–C251. The helical transmembrane segment at V24–V49 threads the bilayer. Over A50–P58 the chain is Cytoplasmic. A helical transmembrane segment spans residues M59–L79. The Extracellular portion of the chain corresponds to E80–D104. A helical membrane pass occupies residues V105–A126. Topologically, residues D127–A147 are cytoplasmic. The chain crosses the membrane as a helical span at residues L148–F168. At S169–A180 the chain is on the extracellular side. Residues L181–L199 form a helical membrane-spanning segment. Topologically, residues A200–G217 are cytoplasmic. The chain crosses the membrane as a helical span at residues A218–F244. The Extracellular segment spans residues C245–S256. A helical membrane pass occupies residues L257 to F278. At R279–W295 the chain is on the cytoplasmic side. C293 is lipidated: S-palmitoyl cysteine.

This sequence belongs to the G-protein coupled receptor 1 family. Homodimer. Interacts with corticotropin (ACTH). Interacts with MRAP; this interaction targets MC2R to the plasma membrane. Interacts with MRAP2; competing with MRAP for binding to MC2R and impairing the binding of corticotropin (ACTH). Ubiquitinated by MGRN1 that may be involved in post-endocytic trafficking and/or degradation of internalized receptor.

It is found in the cell membrane. Functionally, hormone receptor primarily expressed in adrenal cortex that plays a key role in regulating adrenocortical function. Upon corticotropin (ACTH) binding, facilitates the release of adrenal glucocorticoids, including cortisol and corticosterone. In addition, MC2R is required for fetal and neonatal adrenal gland development. Mechanistically, activates adenylate cyclase (cAMP), the MAPK cascade as well as the cAMP-dependent protein kinase A pathway leading to steroidogenic factor 1/NR5A1-mediated transcriptional activation. The polypeptide is Adrenocorticotropic hormone receptor (MC2R) (Ovis aries (Sheep)).